A 703-amino-acid polypeptide reads, in one-letter code: MASQSAHLVKTHQLWELLRHRTKTGSYELDGDSLHIADVVATAQQTSTPRLSEDPKVIKGLQDSVDVLFDHLAKGWYVYGVNTGFGGSADSRTTEVIELQKALMQLTQTGILTTPSDGSAIPGHSTPFEWVRAAMVVRCNASLRGHSAVSLPIIKAIINLLVHGLTPVVPLRGTVSASGDLMPLAYVTGSIEGNPDTLLEKNGKVLPSPKALQEAGLAPVFLGPKEGLGLINGTASSAGLGALVVAQAHSLAFLTQVLTGGAVEALRGSSESFHPFIARARPHPGQIECARNIAYFLRGSHLSRDVLAPKDRRREDLAQDRYSLRSAPQWIGPQLEDLLLADQQISIELNSSCDNPLVDSETNDIYYGCNFQAAAVTSAMEKVRLAMQMFGRMLFAQSTEMIDVHLSGGLPANLAADNPSISFTMKGVDINMAAYMAELSYLANPMSSHVQAAEMHNQSVNSMAFASARISHDAIDVLTKMCACSVFTVCQALDLRALHMAFIADATKALASTIELKFSAKVEAGQLNSLQMLIQAHVTRAWGLTGKLDLHARCESLIDSALPIVLCHVAGDVADIIEWKTQAIEVVWNVWTNTFASFSAAPHTSQLLGAGSRLLYNFVRKTLGVPFHEGFVEHPTADSQTLHSRPKKTIGGWITIIHESIRRGSIYNELLALAEGLLSTKRTDGANGANCTLCHEMKGEIHV.

Y79 acts as the Proton donor/acceptor in catalysis. Residues 177 to 179 (ASG) constitute a cross-link (5-imidazolinone (Ala-Gly)). S178 carries the 2,3-didehydroalanine (Ser) modification.

The protein belongs to the PAL/histidase family. Contains an active site 4-methylidene-imidazol-5-one (MIO), which is formed autocatalytically by cyclization and dehydration of residues Ala-Ser-Gly.

The catalysed reaction is L-phenylalanine = L-beta-phenylalanine. It participates in mycotoxin biosynthesis. Phenylalanine aminomutase; part of the gene cluster that mediates the biosynthesis of the mycotoxin cyclochlorotine, a hepatotoxic and carcinogenic cyclic chlorinated pentapeptide. Within the pathway, cctP1 provides the uncommon building block beta-Phe from Phe. The NRPS cctN initially catalyzes the condensation of L-serine (Ser), Pro, L-2-aminobutyrate (2Abu), Ser, and beta-Phe in this order to produce isocyclotine. After the dichlorination of Pro2 catalyzed by cctP2 to produce isocyclochlorotine, the cctO-mediated transacylation of isocyclochlorotine can furnish cyclochlorotine. The subsequent hydroxylation of cyclochlorotine by cctR yields hydroxycyclochlorotine as the final product. CctP1 probably acts as a phenylalanine aminomutase and provides the uncommon building block beta-Phe. Furthermore, 2Abu can be synthesized from threonine by one of the threonine dehydratases and transaminases localized outside of the cluster. The functions of the remaining proteins encoded by the cluster, cctM and cctT, have not been identified yet. The chain is Phenylalanine aminomutase (L-beta-phenylalanine forming) from Talaromyces islandicus (Penicillium islandicum).